The sequence spans 524 residues: Bifunctional purine biosynthesis protein PurH (524 aa).

One can recognise an MGS-like domain in the interval 1–149 (MSDPLIKRAL…KNNESVTVLT (149 aa)).

Belongs to the PurH family.

It catalyses the reaction (6R)-10-formyltetrahydrofolate + 5-amino-1-(5-phospho-beta-D-ribosyl)imidazole-4-carboxamide = 5-formamido-1-(5-phospho-D-ribosyl)imidazole-4-carboxamide + (6S)-5,6,7,8-tetrahydrofolate. The catalysed reaction is IMP + H2O = 5-formamido-1-(5-phospho-D-ribosyl)imidazole-4-carboxamide. Its pathway is purine metabolism; IMP biosynthesis via de novo pathway; 5-formamido-1-(5-phospho-D-ribosyl)imidazole-4-carboxamide from 5-amino-1-(5-phospho-D-ribosyl)imidazole-4-carboxamide (10-formyl THF route): step 1/1. It participates in purine metabolism; IMP biosynthesis via de novo pathway; IMP from 5-formamido-1-(5-phospho-D-ribosyl)imidazole-4-carboxamide: step 1/1. The polypeptide is Bifunctional purine biosynthesis protein PurH (Chlorobium phaeovibrioides (strain DSM 265 / 1930) (Prosthecochloris vibrioformis (strain DSM 265))).